Consider the following 143-residue polypeptide: Photosystem II extrinsic protein U (143 aa).

Positions 1–29 are cleaved as a signal peptide; that stretch reads MKRLVGVLMILGLMLTSWGLLGSPQTAIA. The propeptide occupies 30 to 44; the sequence is ASLSPLSFNPSPVLA.

Belongs to the PsbU family. As to quaternary structure, PSII is composed of 1 copy each of membrane proteins PsbA, PsbB, PsbC, PsbD, PsbE, PsbF, PsbH, PsbI, PsbJ, PsbK, PsbL, PsbM, PsbT, PsbX, PsbY, PsbZ, Psb30/Ycf12, peripheral proteins PsbO, CyanoQ (PsbQ), PsbU, PsbV and a large number of cofactors. It forms dimeric complexes.

Its subcellular location is the cellular thylakoid membrane. Functionally, one of the extrinsic, lumenal subunits of photosystem II (PSII). PSII is a light-driven water plastoquinone oxidoreductase, using light energy to abstract electrons from H(2)O, generating a proton gradient subsequently used for ATP formation. The extrinsic proteins stabilize the structure of photosystem II oxygen-evolving complex (OEC), the ion environment of oxygen evolution and protect the OEC against heat-induced inactivation. The chain is Photosystem II extrinsic protein U from Leptolyngbya laminosa (Phormidium laminosum).